The primary structure comprises 351 residues: N-acetyl-gamma-glutamyl-phosphate reductase (351 aa).

Cysteine 154 is an active-site residue.

Belongs to the NAGSA dehydrogenase family. Type 1 subfamily.

It is found in the cytoplasm. The catalysed reaction is N-acetyl-L-glutamate 5-semialdehyde + phosphate + NADP(+) = N-acetyl-L-glutamyl 5-phosphate + NADPH + H(+). The protein operates within amino-acid biosynthesis; L-arginine biosynthesis; N(2)-acetyl-L-ornithine from L-glutamate: step 3/4. In terms of biological role, catalyzes the NADPH-dependent reduction of N-acetyl-5-glutamyl phosphate to yield N-acetyl-L-glutamate 5-semialdehyde. This is N-acetyl-gamma-glutamyl-phosphate reductase from Synechocystis sp. (strain ATCC 27184 / PCC 6803 / Kazusa).